Reading from the N-terminus, the 508-residue chain is Putative glycosyl hydrolase ecdF (508 aa).

The N-terminal stretch at 1–15 (MFLHILCLLAGQALA) is a signal peptide. N-linked (GlcNAc...) asparagine glycans are attached at residues Asn-99, Asn-122, Asn-275, and Asn-362.

This sequence belongs to the glycosyl hydrolase 32 family.

In Aspergillus rugulosus (Emericella rugulosa), this protein is Putative glycosyl hydrolase ecdF.